A 538-amino-acid chain; its full sequence is MRNLTKTSLLLAGLCTAAQMVFVTHASAEESIEYDHTYQTPSYIIEKSPQKPVQNTTQKESLFSYLDKHQTQFKLKGNANSHFRVSKTIKDPKTKQTFFKLTEVYKGIPIYGFEQAVAMKENKQVKSFFGKVHPQIKDVSVTPSISEKKAIHTARRELEASIGKIEYLDGEPKGELYIYPHDGEYDLAYLVRLSTSEPEPGYWHYFIDAKNGKVIESFNAIHEAAGTGIGVSGDEKSFDVTEQNGRFYLADETRGKGINTFDAKNLNETLFTLLSQLIGYTGKEIVSGTSVFNEPAAVDAHANAQAVYDYYSKTFGRDSFDQNGARITSTVHVGKQWNNAAWNGVQMVYGDGDGSKFKPLSGSLDIVAHEITHAVTQYSAGLLYQGEPGALNESISDIMGAMADRDDWEIGEDVYTPGIAGDSLRSLEDPSKQGNPDHYSNRYTGTEDYGGVHINSSIHNKAAYLLAEGGVHHGVQVEGIGREASEQIYYRALTYYVTASTDFSMMKQAAIEAANDLYGEGSKQSASVEKAYEAVGIL.

Positions 1 to 28 (MRNLTKTSLLLAGLCTAAQMVFVTHASA) are cleaved as a signal peptide. A propeptide spans 29-223 (EESIEYDHTY…VIESFNAIHE (195 aa)) (activation peptide). Asp365 is a binding site for Ca(2+). His369 contributes to the Zn(2+) binding site. The active site involves Glu370. Positions 373 and 393 each coordinate Zn(2+). Ca(2+)-binding residues include Asp404, Asp406, Asp407, Glu409, Glu412, Tyr415, Thr416, Ile419, and Asp422. Residues 421-441 (GDSLRSLEDPSKQGNPDHYSN) form a disordered region. His453 serves as the catalytic Proton donor.

The protein belongs to the peptidase M4 family. The cofactor is Zn(2+).

The protein localises to the secreted. With respect to regulation, protease activity can be inhibited in vitro by either a zinc specific chelator, 1,10-phenanthroline, or a metal chelator, EDTA. The enzyme is resistant to phenylmethylsulfonyl fluoride and iodoacetic acid. In terms of biological role, protease able to cleave casein in vitro. This chain is Neutral protease B, found in Bacillus subtilis (strain 168).